The following is a 361-amino-acid chain: CRISPR system associated protein Cas8 (361 aa).

Monomer. Can form a Cascade complex with Csa5, Cas7, Cas5a, Cas3 and Cas3'.

CRISPR (clustered regularly interspaced short palindromic repeat) is an adaptive immune system that provides protection against mobile genetic elements (viruses, transposable elements and conjugative plasmids). CRISPR clusters contain sequences complementary to antecedent mobile elements and target invading nucleic acids. CRISPR clusters are transcribed and processed into CRISPR RNA (crRNA). The polypeptide is CRISPR system associated protein Cas8 (cas8a2) (Thermoproteus tenax (strain ATCC 35583 / DSM 2078 / JCM 9277 / NBRC 100435 / Kra 1)).